We begin with the raw amino-acid sequence, 378 residues long: Mating-type protein MAT-1 (378 aa).

A DNA-binding region (alpha box) is located at residues 60-117 (KAKKALNAFVGFRCYYIAIPAFKPWPMKKLSNLISLLWEGDPNKSLWSLMAKAWSNIR). A disordered region spans residues 235 to 256 (SQVDQARVAARNRRRAKRQSAR). The span at 244 to 253 (ARNRRRAKRQ) shows a compositional bias: basic residues.

This sequence belongs to the MATALPHA1 family.

The protein localises to the nucleus. In terms of biological role, mating type proteins are sequence specific DNA-binding proteins that act as master switches in fungal differentiation by controlling gene expression in a cell type-specific fashion. Transcriptional activator that induces the transcription of alpha-specific genes. This is Mating-type protein MAT-1 (MAT1) from Cochliobolus ellisii (Curvularia ellisii).